The chain runs to 465 residues: Protein unc-93 homolog A (465 aa).

The next 5 helical transmembrane spans lie at 8–28, 40–60, 71–91, 96–118, and 140–160; these read VLVV…LQSL, VISL…LPPI, IVVS…PGWA, TSAI…LTIS, and IFFF…SLIF. Asparagine 183 and asparagine 189 each carry an N-linked (GlcNAc...) asparagine glycan. A helical transmembrane segment spans residues 200–220; that stretch reads TLLGCYIGVGLLAIIFVAVFL. Residue asparagine 237 is glycosylated (N-linked (GlcNAc...) asparagine). The next 5 helical transmembrane spans lie at 256-276, 281-301, 319-339, 343-363, and 410-427; these read LLLL…LSGE, YVTC…FAAS, IALF…LLYW, PDQL…DAVW, and IYIA…YLYV.

It belongs to the unc-93 family.

The protein resides in the membrane. The sequence is that of Protein unc-93 homolog A (unc93a) from Danio rerio (Zebrafish).